Reading from the N-terminus, the 1199-residue chain is MVLAVAMSQDADPSGPEQPDRDACVMPGVQGPSVPQGQQGMQPLPPPPPPQPQASLPQIIQNAAKLLDKSPFSVNNQNPLLTSPASVQLAQIQAQLTLHRLKMAQTAVTNNTAAATVLNQVLSKVAMSQPLFNQLRHPSVLGTAHGPTGVSQHAASVPSAHFPSTAIAFSPPSQTGGPGPSVSLPSQPPNAMVVHTFSGVVPQTPAQPAVILSLGKAGPTPATTGFYDYGKANSGQAYGSETEGQPGFLPASASATASGSMTYEGHYSHTGQDGQPAFSKDFYGPNAQGPHIAGGFPADQTGSMKGDVGGLLQGTNSQWERPPGFSGQNKPDITAGPSLWAPPASQPYELYDPEEPTSDRAPPAFGSRLNNSKQGFGCSCRRTKEGQAVLSVRPLQGHQLNDFRGLAPLHLPHICSICDKKVFDLKDWELHVKGKLHAQKCLLFSESAGLRSIRASGEGTLSASANSTAVYNPTGNEDYTSNLGTSYAAIPTRAFAQSNPVFPSASSGTSFAAQRKGAGRVVHICNLPEGSCTENDVINLGLPFGKVTNYILMKSTNQAFLEMAYTEAAQAMVQYYQEKPAIINGEKLLIRMSTRYKELQLKKPGKNVAAIIQDIHSQRERDMLREADRYGPERPRSRSPMSRSLSPRSHSPPGPSRADWGNGRDSYAWRDEDRETVPRRENGEDKRDRLDVWAHDRKHYPRQLDKAELDERLEGGRGYREKYLKSGSPGPLHSVSGYKGREDGYHRKEPKAKLDKYPKQQPDVPGRSRRKEEARLREPRHPHPEDSGKAEDLEPKITRAPDGTKSKQSEKSKTKRADRDQEGADDKKESQLAENEAGAEEQEGMVGIQQEGTESCDPENTRTKKGQDCDSGSEPEGDNWYPTNMEELVTVDEVGEEDFIMEPDLPELEEIVPIDQKDKTLPKICTCVTATLGLDLAKDFTKQGETLGNGDAELSLKLPGQVPSTSASCPNDTDLEMPGLNLDAERKPAESETGLSLEVSNCYEKEARGEEDSDVSLAPAVQQMSSPQPADERARQSSPFLDDCKARGSPEDGSHEASPLEGKASPPTESDLQSQACRENPRYMEVKSLNVRSPEFTEAELKEPLSLPSWEPEVFSELSIPLGVEFVVPRTGFYCKLCGLFYTSEEAAKVSHCRSTVHYRNLQKYLSQLAEEGLKETEGTDSPSPERGGIGPHLERKKL.

Disordered stretches follow at residues 1 to 55, 163 to 186, and 320 to 346; these read MVLA…PQAS, PSTA…SLPS, and ERPP…PASQ. The segment covering 25-42 has biased composition (low complexity); the sequence is VMPGVQGPSVPQGQQGMQ. Over residues 43–52 the composition is skewed to pro residues; it reads PLPPPPPPQP. Positions 170–183 are enriched in low complexity; the sequence is SPPSQTGGPGPSVS. A U1-type zinc finger spans residues 410 to 444; sequence HLPHICSICDKKVFDLKDWELHVKGKLHAQKCLLF. The 76-residue stretch at 520 to 595 folds into the RRM domain; that stretch reads RVVHICNLPE…EKLLIRMSTR (76 aa). A compositionally biased stretch (basic and acidic residues) spans 626-636; sequence EADRYGPERPR. Disordered regions lie at residues 626–685, 720–884, and 944–1077; these read EADR…NGED, REKY…YPTN, and GETL…SQAC. The segment at 630–649 is RS; the sequence is YGPERPRSRSPMSRSLSPRS. Ser637, Ser639, Ser642, Ser644, and Ser651 each carry phosphoserine. The span at 638–649 shows a compositional bias: low complexity; it reads RSPMSRSLSPRS. A compositionally biased stretch (basic and acidic residues) spans 667–685; sequence YAWRDEDRETVPRRENGED. Ser728 is modified (phosphoserine). Composition is skewed to basic and acidic residues over residues 739 to 758, 770 to 831, and 859 to 868; these read KGRE…DKYP, RKEE…KESQ, and ENTRTKKGQD. At Ser787 the chain carries Phosphoserine. 3 positions are modified to phosphoserine: Ser871, Ser873, and Ser955. Polar residues predominate over residues 962–971; sequence VPSTSASCPN. Phosphoserine occurs at positions 991, 1026, 1038, 1049, 1054, 1058, 1070, 1088, and 1093. Residues 1042-1055 are compositionally biased toward basic and acidic residues; that stretch reads DDCKARGSPEDGSH. The span at 1067-1077 shows a compositional bias: polar residues; the sequence is PTESDLQSQAC. A Matrin-type zinc finger spans residues 1133–1164; the sequence is FYCKLCGLFYTSEEAAKVSHCRSTVHYRNLQK. The segment at 1172–1199 is disordered; it reads EGLKETEGTDSPSPERGGIGPHLERKKL. Ser1182 and Ser1184 each carry phosphoserine.

In terms of assembly, associates with components of the U1 and U2 U1 small nuclear ribonucleoprotein complexes. Phosphorylation regulates the subcellular localization. Phosphorylation of Ser-637 and Ser-639 in the RS (arginine/serine-rich) region promotes nuclear localization of the protein. In contrast, phosphorylation of the C-terminal disordered region promotes localization to cytoplasmic ribonucleoprotein granules. In terms of tissue distribution, predominantly expressed in striated muscle, with highest expression in the heart. In differentiating myoblasts, expression correlates with sarcomere assembly: expression peaks when alpha-actinin is localized mainly in mature Z bodies within the nascent myofiber and expression declines as the sarcomeres continue to mature. Also expressed in kidney.

It localises to the nucleus. The protein localises to the cytoplasm. It is found in the cytoplasmic ribonucleoprotein granule. RNA-binding protein that acts as a regulator of mRNA splicing of a subset of genes encoding key structural proteins involved in cardiac development, such as TTN (Titin), CACNA1C, CAMK2D or PDLIM5/ENH. Acts as a repressor of mRNA splicing: specifically binds the 5'UCUU-3' motif that is predominantly found within intronic sequences of pre-mRNAs, leading to the exclusion of specific exons in target transcripts. RBM20-mediated exon skipping is hormone-dependent and is essential for TTN isoform transition in both cardiac and skeletal muscles. RBM20-mediated exon skipping of TTN provides substrates for the formation of circular RNA (circRNAs) from the TTN transcripts. Together with RBM24, promotes the expression of short isoforms of PDLIM5/ENH in cardiomyocytes. This is RNA-binding protein 20 from Mus musculus (Mouse).